The chain runs to 432 residues: D-amino acid dehydrogenase (432 aa).

FAD is bound at residue 3–17; that stretch reads VVILGSGVVGVTSAW.

It belongs to the DadA oxidoreductase family. FAD serves as cofactor.

The enzyme catalyses a D-alpha-amino acid + A + H2O = a 2-oxocarboxylate + AH2 + NH4(+). It functions in the pathway amino-acid degradation; D-alanine degradation; NH(3) and pyruvate from D-alanine: step 1/1. Functionally, oxidative deamination of D-amino acids. In Citrobacter koseri (strain ATCC BAA-895 / CDC 4225-83 / SGSC4696), this protein is D-amino acid dehydrogenase.